The chain runs to 138 residues: Acidic phospholipase A2 Cvv-E6h (138 aa).

Residues 1-16 (MRTLWIVAVLLLGVEG) form the signal peptide. 7 disulfides stabilise this stretch: Cys42–Cys131, Cys44–Cys60, Cys59–Cys111, Cys65–Cys138, Cys66–Cys104, Cys73–Cys97, and Cys91–Cys102. The Ca(2+) site is built by Tyr43, Gly45, and Gly47. Residue His63 is part of the active site. Position 64 (Asp64) interacts with Ca(2+). Asp105 is an active-site residue.

This sequence belongs to the phospholipase A2 family. Group II subfamily. D49 sub-subfamily. The cofactor is Ca(2+). In terms of tissue distribution, expressed by the venom gland.

The protein localises to the secreted. The enzyme catalyses a 1,2-diacyl-sn-glycero-3-phosphocholine + H2O = a 1-acyl-sn-glycero-3-phosphocholine + a fatty acid + H(+). Its function is as follows. Snake venom phospholipase A2 (PLA2) that shows very low inhibition of ADP-induced platelet aggregation in platelet-rich plasma of human, rabbit and guinea pig. In vivo, shows efficient edema-inducing activities in rat paws. PLA2 catalyzes the calcium-dependent hydrolysis of the 2-acyl groups in 3-sn-phosphoglycerides. This is Acidic phospholipase A2 Cvv-E6h from Crotalus viridis viridis (Prairie rattlesnake).